Reading from the N-terminus, the 228-residue chain is 3-dehydroquinate dehydratase (228 aa).

3-dehydroquinate-binding positions include serine 26, 51–53, and arginine 84; that span reads EIR. Residue histidine 127 is the Proton donor/acceptor of the active site. Catalysis depends on lysine 150, which acts as the Schiff-base intermediate with substrate. Positions 190, 209, and 213 each coordinate 3-dehydroquinate.

It belongs to the type-I 3-dehydroquinase family. Homodimer.

It carries out the reaction 3-dehydroquinate = 3-dehydroshikimate + H2O. Its pathway is metabolic intermediate biosynthesis; chorismate biosynthesis; chorismate from D-erythrose 4-phosphate and phosphoenolpyruvate: step 3/7. In terms of biological role, involved in the third step of the chorismate pathway, which leads to the biosynthesis of aromatic amino acids. Catalyzes the cis-dehydration of 3-dehydroquinate (DHQ) and introduces the first double bond of the aromatic ring to yield 3-dehydroshikimate. This Thermoplasma acidophilum (strain ATCC 25905 / DSM 1728 / JCM 9062 / NBRC 15155 / AMRC-C165) protein is 3-dehydroquinate dehydratase.